We begin with the raw amino-acid sequence, 467 residues long: Probable glycerol-3-phosphate dehydrogenase [NAD(+)] 2, cytosolic (467 aa).

Residues 47–52 (GAGAWG), Lys195, and Ala234 each bind NAD(+). Residue Lys195 participates in substrate binding. Lys284 functions as the Proton acceptor in the catalytic mechanism. NAD(+) is bound by residues Arg346 and Gln374. Residue 346-347 (RN) participates in substrate binding.

It belongs to the NAD-dependent glycerol-3-phosphate dehydrogenase family.

It is found in the cytoplasm. The protein localises to the cytosol. The catalysed reaction is sn-glycerol 3-phosphate + NAD(+) = dihydroxyacetone phosphate + NADH + H(+). Its function is as follows. May be involved in cell redox homeostasis. In Oryza sativa subsp. japonica (Rice), this protein is Probable glycerol-3-phosphate dehydrogenase [NAD(+)] 2, cytosolic.